A 156-amino-acid polypeptide reads, in one-letter code: 17.7 kDa class II heat shock protein (156 aa).

One can recognise a sHSP domain in the interval 39-156; the sequence is DAKAMAATPA…KPKTIQVQVA (118 aa).

Belongs to the small heat shock protein (HSP20) family. May form oligomeric structures.

It localises to the cytoplasm. This chain is 17.7 kDa class II heat shock protein (HSP17.7), found in Arabidopsis thaliana (Mouse-ear cress).